The following is a 139-amino-acid chain: Endoribonuclease YbeY (139 aa).

Zn(2+)-binding residues include histidine 110, histidine 114, and histidine 120.

The protein belongs to the endoribonuclease YbeY family. Zn(2+) serves as cofactor.

It localises to the cytoplasm. Single strand-specific metallo-endoribonuclease involved in late-stage 70S ribosome quality control and in maturation of the 3' terminus of the 16S rRNA. The protein is Endoribonuclease YbeY of Thermus thermophilus (strain ATCC BAA-163 / DSM 7039 / HB27).